The sequence spans 425 residues: Riboflavin biosynthesis protein RibBA (425 aa).

Positions 1 to 204 (MTRLDSVERA…IADLIEWRRK (204 aa)) are DHBP synthase. Residues 28–29 (RE), Asp-33, 141–145 (RPGHT), and Glu-165 contribute to the D-ribulose 5-phosphate site. Glu-29 contacts Mg(2+). Position 144 (His-144) interacts with Mg(2+). A GTP cyclohydrolase II region spans residues 205-425 (HEKHIERVAE…HLPGEFGGAL (221 aa)). A GTP-binding site is contributed by 259–263 (RVHSE). Positions 264, 275, and 277 each coordinate Zn(2+). Residues Gln-280, 303-305 (EGR), and Thr-325 contribute to the GTP site. Asp-337 acts as the Proton acceptor; for GTP cyclohydrolase activity in catalysis. Catalysis depends on Arg-339, which acts as the Nucleophile; for GTP cyclohydrolase activity. Thr-360 and Lys-365 together coordinate GTP.

This sequence in the N-terminal section; belongs to the DHBP synthase family. It in the C-terminal section; belongs to the GTP cyclohydrolase II family. Mg(2+) is required as a cofactor. Requires Mn(2+) as cofactor. The cofactor is Zn(2+).

It carries out the reaction D-ribulose 5-phosphate = (2S)-2-hydroxy-3-oxobutyl phosphate + formate + H(+). It catalyses the reaction GTP + 4 H2O = 2,5-diamino-6-hydroxy-4-(5-phosphoribosylamino)-pyrimidine + formate + 2 phosphate + 3 H(+). It participates in cofactor biosynthesis; riboflavin biosynthesis; 2-hydroxy-3-oxobutyl phosphate from D-ribulose 5-phosphate: step 1/1. Its pathway is cofactor biosynthesis; riboflavin biosynthesis; 5-amino-6-(D-ribitylamino)uracil from GTP: step 1/4. Functionally, catalyzes the conversion of D-ribulose 5-phosphate to formate and 3,4-dihydroxy-2-butanone 4-phosphate. Catalyzes the conversion of GTP to 2,5-diamino-6-ribosylamino-4(3H)-pyrimidinone 5'-phosphate (DARP), formate and pyrophosphate. The protein is Riboflavin biosynthesis protein RibBA of Mycobacterium marinum (strain ATCC BAA-535 / M).